A 335-amino-acid chain; its full sequence is Methionine import ATP-binding protein MetN (335 aa).

The region spanning 2–241 (IQFQRLHKSY…PKHATTRRFV (240 aa)) is the ABC transporter domain. 38–45 (GHSGAGKS) contributes to the ATP binding site.

It belongs to the ABC transporter superfamily. Methionine importer (TC 3.A.1.24) family. The complex is composed of two ATP-binding proteins (MetN), two transmembrane proteins (MetI) and a solute-binding protein (MetQ).

The protein resides in the cell inner membrane. It carries out the reaction L-methionine(out) + ATP + H2O = L-methionine(in) + ADP + phosphate + H(+). The enzyme catalyses D-methionine(out) + ATP + H2O = D-methionine(in) + ADP + phosphate + H(+). Functionally, part of the ABC transporter complex MetNIQ involved in methionine import. Responsible for energy coupling to the transport system. The protein is Methionine import ATP-binding protein MetN of Xanthomonas axonopodis pv. citri (strain 306).